The chain runs to 391 residues: Elongation factor Tu (391 aa).

A tr-type G domain is found at 10 to 201 (KPHVNIGTIG…AVDEYIPTPA (192 aa)). The G1 stretch occupies residues 19–26 (GHVDHGKT). 19 to 26 (GHVDHGKT) contacts GTP. T26 lines the Mg(2+) pocket. The segment at 55–59 (GITIS) is G2. The interval 76–79 (DCPG) is G3. Residues 76 to 80 (DCPGH) and 131 to 134 (NKVD) each bind GTP. Residues 131–134 (NKVD) form a G4 region. The interval 169–171 (SAL) is G5.

Belongs to the TRAFAC class translation factor GTPase superfamily. Classic translation factor GTPase family. EF-Tu/EF-1A subfamily. In terms of assembly, monomer.

It is found in the cytoplasm. It catalyses the reaction GTP + H2O = GDP + phosphate + H(+). GTP hydrolase that promotes the GTP-dependent binding of aminoacyl-tRNA to the A-site of ribosomes during protein biosynthesis. This is Elongation factor Tu from Jannaschia sp. (strain CCS1).